We begin with the raw amino-acid sequence, 699 residues long: 1,4-alpha-glucan-branching enzyme (699 aa).

Substrate is bound by residues 59–60 and 88–90; these read NE and WAP. Trp104 serves as a coordination point for (1,4-alpha-D-glucosyl)n. 115–118 is a substrate binding site; that stretch reads DYGK. Lys140 contributes to the (1,4-alpha-D-glucosyl)n binding site. Tyr170 is subject to Phosphotyrosine. Substrate is bound at residue 330-333; that stretch reads EVLR. The active-site Nucleophile is the Asp354. Residue Glu409 is the Proton donor of the active site.

The protein belongs to the glycosyl hydrolase 13 family. GlgB subfamily. Monomer.

The enzyme catalyses Transfers a segment of a (1-&gt;4)-alpha-D-glucan chain to a primary hydroxy group in a similar glucan chain.. The protein operates within glycan biosynthesis; glycogen biosynthesis. Functionally, glycogen-branching enzyme participates in the glycogen biosynthetic process along with glycogenin and glycogen synthase. Generates alpha-1,6-glucosidic branches from alpha-1,4-linked glucose chains, to increase solubility of the glycogen polymer. The protein is 1,4-alpha-glucan-branching enzyme (GBE1) of Equus caballus (Horse).